The chain runs to 693 residues: Translation factor GUF1 homolog, mitochondrial (693 aa).

The segment covering 51–63 has biased composition (polar residues); that stretch reads SSSSTEKPTTSGT. The disordered stretch occupies residues 51 to 78; it reads SSSSTEKPTTSGTINGGGGKQKAASQPK. In terms of domain architecture, tr-type G spans 88 to 270; it reads QKIRNFSIIA…RIVQMVPPPP (183 aa). GTP is bound by residues 97-104, 163-167, and 217-220; these read AHIDHGKS, DTPGH, and NKID.

The protein belongs to the TRAFAC class translation factor GTPase superfamily. Classic translation factor GTPase family. LepA subfamily.

Its subcellular location is the mitochondrion inner membrane. The catalysed reaction is GTP + H2O = GDP + phosphate + H(+). Promotes mitochondrial protein synthesis. May act as a fidelity factor of the translation reaction, by catalyzing a one-codon backward translocation of tRNAs on improperly translocated ribosomes. Binds to mitochondrial ribosomes in a GTP-dependent manner. The sequence is that of Translation factor GUF1 homolog, mitochondrial from Phaeodactylum tricornutum (strain CCAP 1055/1).